Consider the following 30-residue polypeptide: GLPCGESCVFIPCITTVVGCSCKNKVCYNN.

The segment at residues Gly-1–Asn-30 is a cross-link (cyclopeptide (Gly-Asn)). Cystine bridges form between Cys-4–Cys-20, Cys-8–Cys-22, and Cys-13–Cys-27.

Post-translationally, contains 3 disulfide bonds. This is a cyclic peptide.

Its function is as follows. Probably participates in a plant defense mechanism. In Clitoria ternatea (Butterfly pea), this protein is Cyclotide cter-G.